Here is a 64-residue protein sequence, read N- to C-terminus: DNA gyrase inhibitor YacG (64 aa).

Zn(2+) is bound by residues cysteine 10, cysteine 13, cysteine 29, and cysteine 33.

It belongs to the DNA gyrase inhibitor YacG family. Interacts with GyrB. Zn(2+) is required as a cofactor.

Inhibits all the catalytic activities of DNA gyrase by preventing its interaction with DNA. Acts by binding directly to the C-terminal domain of GyrB, which probably disrupts DNA binding by the gyrase. The polypeptide is DNA gyrase inhibitor YacG (Pectobacterium carotovorum subsp. carotovorum (strain PC1)).